The primary structure comprises 364 residues: Poly(3-hydroxyalkanoate) polymerase subunit PhaE (364 aa).

Residues 322–364 (SGKTPTTALKAPAPATKATEKPATRATTRRKTAAKPTGGTADD) are disordered. The segment covering 324–338 (KTPTTALKAPAPATK) has biased composition (low complexity).

This sequence belongs to the PHA/PHB synthase family. Type III PhaE subfamily. As to quaternary structure, forms a heterodimer with PhaC, which may multimerize in the presence of 3-hydroxybutyryl-CoA.

It localises to the cytoplasm. Its pathway is biopolymer metabolism; poly-(R)-3-hydroxybutanoate biosynthesis. Polymerizes D(-)-3-hydroxybutyryl-CoA to create polyhydroxybutyrate (PHB) which consists of thousands of hydroxybutyrate molecules linked end to end. This subunit has no catalytic activity but enhances the activity of PhaC, the catalytic subunit. The protein is Poly(3-hydroxyalkanoate) polymerase subunit PhaE of Thiocystis violacea.